A 377-amino-acid polypeptide reads, in one-letter code: Peptidyl-prolyl cis-trans isomerase D (377 aa).

One can recognise a PPIase cyclophilin-type domain in the interval 11-178; sequence YFDIQIGSQK…TDVTIVDCGE (168 aa). TPR repeat units follow at residues 220–253, 273–306, and 314–347; these read ASEL…LNEF, FTLH…ADAA, and AKAY…APGD.

It belongs to the cyclophilin-type PPIase family. PPIase D subfamily.

The protein resides in the cytoplasm. The catalysed reaction is [protein]-peptidylproline (omega=180) = [protein]-peptidylproline (omega=0). In terms of biological role, PPIases accelerate the folding of proteins. It catalyzes the cis-trans isomerization of proline imidic peptide bonds in oligopeptides. The sequence is that of Peptidyl-prolyl cis-trans isomerase D (cpr6) from Aspergillus fumigatus (strain ATCC MYA-4609 / CBS 101355 / FGSC A1100 / Af293) (Neosartorya fumigata).